Here is a 244-residue protein sequence, read N- to C-terminus: Nonsense-mediated decay protein 4 (244 aa).

The protein resides in the cytoplasm. Its function is as follows. Involved in nonsense-mediated decay of mRNAs containing premature stop codons. This Candida glabrata (strain ATCC 2001 / BCRC 20586 / JCM 3761 / NBRC 0622 / NRRL Y-65 / CBS 138) (Yeast) protein is Nonsense-mediated decay protein 4 (NMD4).